Consider the following 477-residue polypeptide: Tripartite motif-containing protein 72 (477 aa).

Zn(2+) is bound by residues Cys-14, Cys-17, Cys-29, His-31, Cys-34, Cys-37, Cys-53, Cys-56, Cys-86, His-89, Cys-97, Asp-100, Cys-105, Cys-108, His-114, and His-117. The segment at 14–57 (CPLCLQLFDAPVTAECGHSFCRACLGRVAGEPAADGTVLCPCCQ) adopts an RING-type zinc-finger fold. A B box-type zinc finger spans residues 81 to 122 (VPQGHCEEHLDPLSIYCEQDRALVCGVCASLGSHRGHRLLPA). The stretch at 135-232 (QQKLQLQEAC…EKVLEEVADK (98 aa)) forms a coiled coil. S-nitrosocysteine is present on Cys-144. Residue Ser-255 is modified to Phosphoserine. Residues 271 to 475 (DFKFQVWRKM…PLLLVGPEGA (205 aa)) enclose the B30.2/SPRY domain.

This sequence belongs to the TRIM/RBCC family. As to quaternary structure, homodimer. Homooligomer; disulfide-linked. Oligomerizes on the phospholipid membrane. Interacts with DYSF and CAV3. Post-translationally, disulfide bond formation at Cys-242 occurs in case of membrane damage that cause the entry of the oxidized milieu of the extracellular space, resulting in homooligomerization. S-nitrosylation at Cys-144 stabilizes TRIM72 and protects against oxidation-induced protein degradation and cell death.

It localises to the cell membrane. The protein localises to the sarcolemma. It is found in the cytoplasmic vesicle membrane. The catalysed reaction is S-ubiquitinyl-[E2 ubiquitin-conjugating enzyme]-L-cysteine + [acceptor protein]-L-lysine = [E2 ubiquitin-conjugating enzyme]-L-cysteine + N(6)-ubiquitinyl-[acceptor protein]-L-lysine.. It participates in protein modification; protein ubiquitination. With respect to regulation, specifically binds phosphatidylserine. The binding to phospholipids enhances ubiquitination activity. Functionally, muscle-specific E3 ubiquitin-protein ligase that plays a central role in cell membrane repair by nucleating the assembly of the repair machinery at injury sites. Its ubiquitination activity is mediated by E2 ubiquitin-conjugating enzymes UBE2D1, UBE2D2 and UBE2D3. Acts as a sensor of oxidation: upon membrane damage, entry of extracellular oxidative environment results in disulfide bond formation and homooligomerization at the injury site. This oligomerization acts as a nucleation site for recruitment of TRIM72-containing vesicles to the injury site, leading to membrane patch formation. Probably acts upstream of the Ca(2+)-dependent membrane resealing process. Required for transport of DYSF to sites of cell injury during repair patch formation. Regulates membrane budding and exocytosis. May be involved in the regulation of the mobility of KCNB1-containing endocytic vesicles. The chain is Tripartite motif-containing protein 72 from Homo sapiens (Human).